A 1365-amino-acid chain; its full sequence is Zinc finger protein 423 (1365 aa).

A compositionally biased stretch (basic residues) spans 1 to 11 (MSRRKQAKPRS). The segment at 1 to 69 (MSRRKQAKPR…SHDERVGEED (69 aa)) is disordered. The span at 37–51 (VSERDSDRKESRAVG) shows a compositional bias: basic and acidic residues. The segment at 76–98 (FTCDNCQQDFECLADLTEHRTNH) adopts a C2H2-type 1 zinc-finger fold. The segment at 99–126 (CPADGDDDPGLSWVASSPSSKDVASPSQ) is disordered. The segment covering 112 to 126 (VASSPSSKDVASPSQ) has biased composition (low complexity). 4 C2H2-type zinc fingers span residues 150–172 (YPCQ…EQIH), 178–200 (FKCT…VKLH), 206–228 (YSCQ…LKTH), and 234–256 (FKCS…MQAH). The disordered stretch occupies residues 250-280 (QSHMQAHRKNKEHLAKKDQGKRDGSSSDVTE). Basic and acidic residues predominate over residues 261–274 (EHLAKKDQGKRDGS). C2H2-type zinc fingers lie at residues 286–309 (YMCD…LTQH), 318–341 (LQCI…DRTH), and 346–368 (HKCP…LDSH). Positions 366-429 (DSHRQPDSSN…LAPSSDHDDG (64 aa)) are disordered. The span at 386–400 (SVASMSSATPDSSAS) shows a compositional bias: low complexity. The C2H2-type 9; degenerate zinc-finger motif lies at 437-461 (YSCPYCSKRDFNSLAVLEIHLKTIH). 3 consecutive C2H2-type zinc fingers follow at residues 469-492 (HTCQ…RKAH), 513-536 (FHCN…RVSH), and 555-578 (FFCN…QQTH). Residues 603–628 (YSCPYCTNSPIFGSLLKLTKHIKENH) form a C2H2-type 13; atypical zinc finger. 7 consecutive C2H2-type zinc fingers follow at residues 675-697 (YPCN…LKSH), 705-728 (QSCP…LTIH), 736-759 (YVCE…LDMH), 764-787 (YHCT…AVKH), 794-817 (YRCT…KHSH), 831-853 (RKCI…ITTH), and 857-880 (YNCR…REKH). Positions 885 to 895 (GGNGNGNGGSQ) are enriched in gly residues. The tract at residues 885–916 (GGNGNGNGGSQNGTPNGVTQSSKRSTAGSTAA) is disordered. Polar residues predominate over residues 902 to 913 (VTQSSKRSTAGS). A C2H2-type 21; degenerate zinc finger spans residues 954 to 976 (YACDICGAAYTMESLLQNHRLRD). C2H2-type zinc fingers lie at residues 1000-1022 (HKCN…AQTH), 1029-1051 (YMCP…KVTH), 1090-1112 (FRCV…GTFH), 1201-1224 (LRCS…QVDH), 1249-1271 (YQCI…VANH), 1279-1301 (HECK…LIEH), 1310-1333 (FKCP…FAVH), and 1340-1363 (YDCS…LSQH).

This sequence belongs to the krueppel C2H2-type zinc-finger protein family.

It is found in the nucleus. In terms of biological role, transcription factor that can both act as an activator or a repressor depending on the context. Plays a central role in BMP signaling and olfactory neurogenesis. Associates with SMADs in response to bmp2 leading to activate transcription of BMP target genes. Acts as a transcriptional repressor involved in terminal olfactory receptor neurons differentiation. Involved in olfactory neurogenesis by participating in a developmental switch that regulates the transition from differentiation to maturation in olfactory receptor neurons. The sequence is that of Zinc finger protein 423 (znf423) from Danio rerio (Zebrafish).